Here is a 557-residue protein sequence, read N- to C-terminus: Copine-4 (557 aa).

2 C2 domains span residues 3–131 (KMSN…SKSL) and 137–264 (TAGK…VQWE). Residues D170, D176, D232, D234, and D240 each coordinate Ca(2+). Residues 305–507 (QIQFTVAIDF…VLRDIVQFVP (203 aa)) enclose the VWFA domain.

This sequence belongs to the copine family. As to quaternary structure, interacts (via VWFA domain) with ACTB, BCOR, BICD2, CCDC22, CDC42BPB, CEP162, MYCBP2, NONO, PDCD6, PITPNM2, RDX, SKIL, SKT, SPTBN1, UBE2O and WTAP. It depends on Ca(2+) as a cofactor.

Probable calcium-dependent phospholipid-binding protein that may play a role in calcium-mediated intracellular processes. The protein is Copine-4 of Mus musculus (Mouse).